A 360-amino-acid polypeptide reads, in one-letter code: S-adenosylmethionine:tRNA ribosyltransferase-isomerase (360 aa).

This sequence belongs to the QueA family. In terms of assembly, monomer.

Its subcellular location is the cytoplasm. The catalysed reaction is 7-aminomethyl-7-carbaguanosine(34) in tRNA + S-adenosyl-L-methionine = epoxyqueuosine(34) in tRNA + adenine + L-methionine + 2 H(+). It participates in tRNA modification; tRNA-queuosine biosynthesis. Functionally, transfers and isomerizes the ribose moiety from AdoMet to the 7-aminomethyl group of 7-deazaguanine (preQ1-tRNA) to give epoxyqueuosine (oQ-tRNA). In Rhodopseudomonas palustris (strain ATCC BAA-98 / CGA009), this protein is S-adenosylmethionine:tRNA ribosyltransferase-isomerase.